A 575-amino-acid polypeptide reads, in one-letter code: FAD-linked oxidoreductase asqF (575 aa).

The first 23 residues, Met1–Arg23, serve as a signal peptide directing secretion. 2 N-linked (GlcNAc...) asparagine glycosylation sites follow: Asn45 and Asn80. Positions Asn118 to Asp306 constitute an FAD-binding PCMH-type domain. His156 carries the post-translational modification Pros-8alpha-FAD histidine. A glycan (N-linked (GlcNAc...) asparagine) is linked at Asn370.

Belongs to the oxygen-dependent FAD-linked oxidoreductase family. FAD is required as a cofactor.

It catalyses the reaction peniprequinolone + A = yaequinolone E + AH2. The protein operates within secondary metabolite biosynthesis. It participates in alkaloid biosynthesis. It functions in the pathway mycotoxin biosynthesis. Functionally, FAD-linked oxidoreductase; part of the gene cluster that mediates the biosynthesis of the aspoquinolone mycotoxins. Within the pathway, asqF performs FAD-dependent dehydrogenation of the dimethylallyl quinolone peniprequinolone to yield the conjugated aryl diene yaequinolone E. The first step of the pathway is catalyzed by the nonribosomal peptide synthetase asqK that condenses anthranilic acid and O-methyl-L-tyrosine to produce 4'-methoxycyclopeptin. 4'-methoxycyclopeptin is then converted to 4'-methoxydehydrocyclopeptin by the ketoglutarate-dependent dioxygenase asqJ. AsqJ also converts its first product 4'-methoxydehydrocyclopeptin to 4'-methoxycyclopenin. The following conversion of 4'-methoxycyclopenin into 4'-methoxyviridicatin is catalyzed by the cyclopenase asqI. 4'-methoxyviridicatin is the precursor of quinolone natural products, and is further converted to quinolinone B. The prenyltransferase asqH1 then catalyzes the canonical Friedel-Crafts alkylation of quinolinone B with dimethylallyl cation to yield dimethylallyl quinolone, which is subjected to FAD-dependent dehydrogenation by the FAD-linked oxidoreductase asqF to yield conjugated aryl diene. The delta(3') double bond then serves as the site of the second alkylation with DMAPP catalyzed by the prenyltransferase asqH2 to yield a carbenium ion intermediate, which can be attacked by H(2)O to yield a styrenyl quinolone containing a C3'-hydroxyprenyl chain. The FAD-dependent monooxygenase asqG performs epoxidation of the terminal C7'-C8' olefin. Finally, after dehydratation of the epoxide at C3 by asqC, the quinolone epoxide rearrangement protein asqO catalyzes an enzymatic 3-exo-tet cyclization to yield the cyclopropyl-THF ring system in aspoquinolone. The protein is FAD-linked oxidoreductase asqF of Emericella nidulans (strain FGSC A4 / ATCC 38163 / CBS 112.46 / NRRL 194 / M139) (Aspergillus nidulans).